The sequence spans 787 residues: Formate acetyltransferase (787 aa).

The region spanning 8-629 (NIFEQAWDGF…GNSPVHKGVF (622 aa)) is the PFL domain. Catalysis depends on cysteine 416, which acts as the S-acetylcysteine intermediate. Residue cysteine 417 is the Cysteine radical intermediate of the active site. The region spanning 645–774 (SPGANPSNKA…LTERVFHEVL (130 aa)) is the Glycine radical domain. Glycine 749 is modified (glycine radical).

This sequence belongs to the glycyl radical enzyme (GRE) family. PFL subfamily. Homodimer.

Its subcellular location is the cytoplasm. It carries out the reaction formate + acetyl-CoA = pyruvate + CoA. Its pathway is fermentation; pyruvate fermentation; formate from pyruvate: step 1/1. In Lactococcus lactis subsp. lactis (strain IL1403) (Streptococcus lactis), this protein is Formate acetyltransferase (pfl).